The primary structure comprises 444 residues: Cell division cycle 20.4, cofactor of APC complex (444 aa).

The span at 88-99 shows a compositional bias: polar residues; that stretch reads LLSTNHSDSPHQ. Residues 88 to 108 form a disordered region; it reads LLSTNHSDSPHQNPKPVKPRR. WD repeat units lie at residues 124–161, 166–205, 209–246, 250–289, 298–340, 342–383, and 386–425; these read RDDFSLNLLDWGSANVLAIALGDTVYLWDASSGSTSEL, EDKGPVTSINWTQDGLDLAVGLDNSEVQLWDCVSNRQVRT, GHESRVGSLAWDNHILTTGGMDGKIVNNDVRIRSSIVE, GHTEEVCGLKWSESGNKQASGGNDNVVHIWDRSLASSKQT, EHTA…CLNS, ETGS…KMAE, and GHTSRVLFMAQSPNGCTVASAAGDENLRLWNVFGEPPKTT.

It belongs to the WD repeat CDC20/Fizzy family. The APC/C is composed of at least 11 subunits that stay tightly associated throughout the cell cycle.

The protein resides in the cytoplasm. Its pathway is protein modification; protein ubiquitination. Component of the anaphase promoting complex/cyclosome (APC/C), a cell cycle-regulated E3 ubiquitin-protein ligase complex that controls progression through mitosis and the G1 phase of the cell cycle. The sequence is that of Cell division cycle 20.4, cofactor of APC complex (CDC20-4) from Arabidopsis thaliana (Mouse-ear cress).